We begin with the raw amino-acid sequence, 369 residues long: Ribosome-interacting GTPase 1 (369 aa).

S2 is subject to N-acetylserine. In terms of domain architecture, OBG-type G spans 66-292 (ASVGFVGFPS…LLQVMWDRLN (227 aa)). Residues 72–79 (GFPSVGKS), 118–122 (DLPGI), and 250–253 (NKID) each bind GTP. The 77-residue stretch at 292–368 (NLVRIYTKPK…EDEDVVTILK (77 aa)) folds into the TGS domain.

The protein belongs to the TRAFAC class OBG-HflX-like GTPase superfamily. OBG GTPase family. Associates with translating polyribosomes. Interacts with GIR2, TMA46, YAP1 and YGR250C.

The protein localises to the cytoplasm. Its function is as follows. Involved in ribosomal function. The protein is Ribosome-interacting GTPase 1 (RBG1) of Saccharomyces cerevisiae (strain ATCC 204508 / S288c) (Baker's yeast).